Reading from the N-terminus, the 150-residue chain is Large ribosomal subunit protein bL9 (150 aa).

The protein belongs to the bacterial ribosomal protein bL9 family.

Functionally, binds to the 23S rRNA. The protein is Large ribosomal subunit protein bL9 of Shewanella pealeana (strain ATCC 700345 / ANG-SQ1).